A 409-amino-acid polypeptide reads, in one-letter code: Iron(III) salmochelin esterase (409 aa).

The protein belongs to the Fes family.

Its subcellular location is the cytoplasm. The enzyme catalyses Fe(III)-C-5-deoxy-beta-D-glucosyl-enterobactin + H2O = Fe(III)-{di[N-(2,3-dihydroxybenzoyl)-L-seryl]-N-(C-5-[deoxy-beta-D-glucosyl]-2,3-dihydroxybenzoyl)-L-serine} + H(+). It carries out the reaction Fe(III)-{di[N-(2,3-dihydroxybenzoyl)-L-seryl]-N-(C-5-[deoxy-beta-D-glucosyl]-2,3-dihydroxybenzoyl)-L-serine} + H2O + H(+) = Fe(III)-{N-(2,3-dihydroxybenzoyl)-L-seryl-N-(C-5-[deoxy-beta-D-glucosyl]-2,3-dihydroxybenzoyl)-L-serine} + N-(2,3-dihydroxybenzoyl)-L-serine. The catalysed reaction is Fe(III)-{N-(2,3-dihydroxybenzoyl)-L-seryl-[N-(C-5-[deoxy-beta-D-glucosyl]-2,3-dihydroxybenzoyl)-L-serine]2} + H2O + H(+) = Fe(III)-{N-(2,3-dihydroxybenzoyl)-L-seryl-N-(C-5-[deoxy-beta-D-glucosyl]-2,3-dihydroxybenzoyl)-L-serine} + N-(C-5-[deoxy-beta-D-glucosyl]-2,3-dihydroxybenzoyl)-L-serine. It catalyses the reaction Fe(III)-di(C-5-deoxy-beta-D-glucosyl)-enterobactin + H2O = Fe(III)-{N-(2,3-dihydroxybenzoyl)-L-seryl-[N-(C-5-[deoxy-beta-D-glucosyl]-2,3-dihydroxybenzoyl)-L-serine]2} + H(+). The enzyme catalyses Fe(III)-{N-(2,3-dihydroxybenzoyl)-L-seryl-[N-(C-5-[deoxy-beta-D-glucosyl]-2,3-dihydroxybenzoyl)-L-serine]2} + H2O + H(+) = Fe(III)-[N-(C-5-[deoxy-beta-D-glucosyl]-2,3-dihydroxybenzoyl)-L-serine]2 + N-(2,3-dihydroxybenzoyl)-L-serine. It carries out the reaction Fe(III)-[N-(C-5-[deoxy-beta-D-glucosyl]-2,3-dihydroxybenzoyl)-L-serine]2 + H2O + H(+) = Fe(III)-[N-(C-5-[deoxy-beta-D-glucosyl]-2,3-dihydroxybenzoyl)-L-serine] + N-(C-5-[deoxy-beta-D-glucosyl]-2,3-dihydroxybenzoyl)-L-serine. Catalyzes the hydrolysis of both the apo and Fe3(+)-bound forms of enterobactin (Ent), monoglucosyl-C-Ent (MGE), diglucosyl-C-Ent (DGE) and triglucosyl-C-Ent (TGE). Shows higher catalytic efficiencies on Fe3(+)-bound forms. The initial linear trimer products are, in turn, very good substrates for further hydrolytic cleavage by IroD, leading to complete degradation of the trilactone to DHB-Ser and/or Glc-DHB-Ser monomers. Hydrolyzes MGE and DGE regioselectively. May be the ferric MGE/DGE esterase responsible for cytoplasmic iron release. The polypeptide is Iron(III) salmochelin esterase (Escherichia coli O6:H1 (strain CFT073 / ATCC 700928 / UPEC)).